Reading from the N-terminus, the 298-residue chain is GTP cyclohydrolase FolE2 (298 aa).

It belongs to the GTP cyclohydrolase IV family.

The enzyme catalyses GTP + H2O = 7,8-dihydroneopterin 3'-triphosphate + formate + H(+). It participates in cofactor biosynthesis; 7,8-dihydroneopterin triphosphate biosynthesis; 7,8-dihydroneopterin triphosphate from GTP: step 1/1. In terms of biological role, converts GTP to 7,8-dihydroneopterin triphosphate. The polypeptide is GTP cyclohydrolase FolE2 (Pseudomonas fluorescens (strain SBW25)).